The sequence spans 555 residues: Putative polyketide hydroxylase (555 aa).

FAD-binding positions include 16–45 (PVLV…LVER) and 303–313 (YRAGRVFLAGD). The tract at residues 366 to 395 (ATTARAAARSAEHSHPGFAPPPGTSGGPQG) is disordered.

Belongs to the PheA/TfdB FAD monooxygenase family. It depends on FAD as a cofactor.

Functionally, involved in developmentally regulated synthesis of a compound biosynthetically related to polyketide antibiotics which is essential for spore color in Streptomyces halstedii. This Streptomyces halstedii protein is Putative polyketide hydroxylase (schC).